The following is a 328-amino-acid chain: Aryl-hydrocarbon-interacting protein-like 1 (328 aa).

Positions lysine 53 to glutamine 145 constitute a PPIase FKBP-type domain. TPR repeat units lie at residues valine 178–leucine 211, asparagine 230–isoleucine 263, and valine 264–methionine 297.

In terms of assembly, interacts with NUB1. As to expression, highly expressed in retina.

It localises to the cytoplasm. Its subcellular location is the nucleus. Its function is as follows. May be important in protein trafficking and/or protein folding and stabilization. The chain is Aryl-hydrocarbon-interacting protein-like 1 (Aipl1) from Rattus norvegicus (Rat).